Consider the following 243-residue polypeptide: CRISPR-associated endoribonuclease Cas6 (243 aa).

It belongs to the CRISPR-associated endoribonuclease Cas6 family. As to quaternary structure, part of the Csm effector complex that includes at least Cas10(1), Csm2(3), Csm3(5), Csm4(1); the presence of Csm5 and Cas6 may depend on the processing state of precursor crRNA. Csm with a precursor crRNA does not include Csm5, while Cas6, the enzyme probably involved in pre-crRNA processing, is found associated with a subset of the Csm complex that is probably in the process of pre-crRNA maturation. The Csm complex is elongated and slightly twisted with a maximal length of 215 Angstroms and a diameter of 75-80 Angstroms. It has been modeled to have a central protein filamant of Csm3 subunits along which the dsRNA helix of paired crRNA and target RNA binds. The filament is capped at one end by Cas10 and Csm4 and at the other end by Csm5; ssDNA is thought to bind to the N-terminal HD domain of Cas10.

CRISPR (clustered regularly interspaced short palindromic repeat) is an adaptive immune system that provides protection against mobile genetic elements (viruses, transposable elements and conjugative plasmids). CRISPR clusters contain spacers, sequences complementary to antecedent mobile elements, and target invading nucleic acids. CRISPR clusters are transcribed and processed into CRISPR RNA (crRNA). The type III-A Csm effector complex binds crRNA and acts as a crRNA-guided RNase, DNase and cyclic oligoadenylate synthase; binding of target RNA cognate to the crRNA is required for all activities. In a heterologous host this Csm effector complex restricts ssRNA phage MS2, suggesting it may target RNA viruses in vivo. Functionally, csm functions as a non-specific ssDNase. Base-pairing between crRNA and target RNA to form a ternary Csm complex activates a ssDNase activity; target RNA cleavage suppresses the ssDNase, a temporal control that prevents uncontrolled DNA degradation. Viral RNA transcripts probably tether the Csm complex to the viral genome, recruiting Cas10 ssDNA activity which is able to degrade DNA in the transcription bubble, spatially controlling the DNase activity. Its function is as follows. This protein processes pre-crRNA into individual crRNA units. The chain is CRISPR-associated endoribonuclease Cas6 from Streptococcus thermophilus.